The following is a 190-amino-acid chain: Elongation factor P (190 aa).

Belongs to the elongation factor P family.

It is found in the cytoplasm. It functions in the pathway protein biosynthesis; polypeptide chain elongation. Its function is as follows. Involved in peptide bond synthesis. Stimulates efficient translation and peptide-bond synthesis on native or reconstituted 70S ribosomes in vitro. Probably functions indirectly by altering the affinity of the ribosome for aminoacyl-tRNA, thus increasing their reactivity as acceptors for peptidyl transferase. This is Elongation factor P from Hyphomonas neptunium (strain ATCC 15444).